The sequence spans 960 residues: MGSAARNLCIKGAREHNLKNIDVMLPRDALVVISGLSGSGKSSLAFDTIFAEGQRRYVESLSAYARQFLGRLDKPDVDSIEGLSPAIAIEQKTTQRNPRSTVGTVTEIYDYYRLLFARIGRAHCPHCAREIKEQTVDQIVDTLMTVPSGSRIQLLAPVVRGKKGTHHKVLEAARKDGFVRARIDGALLHLHERISLDKQKKHSIDIVVDRIQLSDTVRKRLTESVETTLGYADGLLTVLVQGENSGTVSGKIETSALLPSELFFSQKNACAHCNVSVPELQPRLFSFNAPFGACPSCAGLGIMQTFDLDRIVPDQNRSFNEGAFLPFKPEHEWNRVRFAALAEKYHFSLDDPVRNLSKHALDIILHGSGSEALEFSHERKDGSRTARYIKPWPGIFSELHRRYAESCTHSQREVYERYLSVRTCEACRGMRLKPESLAVTIEKKNIHALSALSVDDSCEFFKTLHLTEVEATIAQQILKEITDRLEFLQNVGLGYLTLERAAATLSGGEAQRIRLATQIGSRLTGVLYILDEPSIGLHQRDNERLIQTLLHLRDLGNTVLVVEHDEQTLRVADYIVDLGPGAGVHGGYVVAAGSPPEVMQVQASLTGQYLAGAITLPIPAVRRTGNGNVLTVHDVHEHNLQHISVRIRLGTFTCITGVSGSGKSTLLIDVLYPALYNRVMNGRLPEGKFSSIEGTEHLDKVIYVDQSPIGRTPRSNPATYVGVFTDIRMLFSQVPEAKMRGYKPGRFSFNVPGGRCEHCKGDGVITIEMNFLPDVYITCDVCHGTRFNRETLAVFYKGKNISHVLDMTIEEARSFFSAVPPIVRKLEALCSVGLGYVRLGQSALTLSGGEAQRVKLALELSKRATGKTLYIFDEPTTGLHFADIIQLMEVVQRLVDQGNTVVMIEHNMDVIVQADCVIDLGPEGGMHGGTIVAQGSPEAVSQITESRTGWYIKEVLCKKT.

35-42 is a binding site for ATP; sequence GLSGSGKS. The C4-type zinc-finger motif lies at 270–297; that stretch reads CAHCNVSVPELQPRLFSFNAPFGACPSC. 2 consecutive ABC transporter domains span residues 327-605 and 625-953; these read FKPE…QASL and GNGN…WYIK. ATP is bound at residue 657-664; that stretch reads GVSGSGKS. The segment at 756–782 adopts a C4-type zinc-finger fold; that stretch reads CEHCKGDGVITIEMNFLPDVYITCDVC.

The protein belongs to the ABC transporter superfamily. UvrA family. In terms of assembly, forms a heterotetramer with UvrB during the search for lesions.

The protein resides in the cytoplasm. Its function is as follows. The UvrABC repair system catalyzes the recognition and processing of DNA lesions. UvrA is an ATPase and a DNA-binding protein. A damage recognition complex composed of 2 UvrA and 2 UvrB subunits scans DNA for abnormalities. When the presence of a lesion has been verified by UvrB, the UvrA molecules dissociate. This chain is UvrABC system protein A, found in Treponema pallidum (strain Nichols).